Reading from the N-terminus, the 116-residue chain is MAGRSGDNDEGLLRACRIIRLLYQSNPYPEPAGTRQAQRNRRRRWRARQRQIHSIGERVLATCLGGPAEPVPLQLPPLERLTLDCSEDCGTSGEKGVGSPQTSGESPAVLGTGAKE.

A Phosphoserine; by host CK2 modification is found at serine 5. The tract at residues 18 to 26 is homomultimerization; that stretch reads IIRLLYQSN. A disordered region spans residues 27 to 49; it reads PYPEPAGTRQAQRNRRRRWRARQ. The Nuclear localization signal and RNA-binding (RRE) motif lies at 34-50; that stretch reads TRQAQRNRRRRWRARQR. Residues 38-49 are compositionally biased toward basic residues; sequence QRNRRRRWRARQ. A Nuclear export signal and binding to XPO1 motif is present at residues 73-84; it reads LQLPPLERLTLD. A disordered region spans residues 86–116; it reads SEDCGTSGEKGVGSPQTSGESPAVLGTGAKE. A phosphoserine; by host mark is found at serine 92 and serine 99.

It belongs to the HIV-1 REV protein family. In terms of assembly, homomultimer; when bound to the RRE. Multimeric assembly is essential for activity and may involve XPO1. Binds to human KPNB1, XPO1, TNPO1, RANBP5 and IPO7. Interacts with the viral Integrase. Interacts with human KHDRBS1. Interacts with human NAP1; this interaction decreases Rev multimerization and stimulates its activity. Interacts with human DEAD-box helicases DDX3 and DDX24; these interactions may serve for viral RNA export to the cytoplasm and packaging, respectively. Interacts with human PSIP1; this interaction may inhibit HIV-1 DNA integration by promoting dissociation of the Integrase-LEDGF/p75 complex. In terms of processing, asymmetrically arginine dimethylated at one site by host PRMT6. Methylation impairs the RNA-binding activity and export of viral RNA from the nucleus to the cytoplasm. Post-translationally, phosphorylated by protein kinase CK2. Presence of, and maybe binding to the N-terminus of the regulatory beta subunit of CK2 is necessary for CK2-mediated Rev's phosphorylation.

The protein resides in the host nucleus. It is found in the host nucleolus. The protein localises to the host cytoplasm. Functionally, escorts unspliced or incompletely spliced viral pre-mRNAs (late transcripts) out of the nucleus of infected cells. These pre-mRNAs carry a recognition sequence called Rev responsive element (RRE) located in the env gene, that is not present in fully spliced viral mRNAs (early transcripts). This function is essential since most viral proteins are translated from unspliced or partially spliced pre-mRNAs which cannot exit the nucleus by the pathway used by fully processed cellular mRNAs. Rev itself is translated from a fully spliced mRNA that readily exits the nucleus. Rev's nuclear localization signal (NLS) binds directly to KPNB1/Importin beta-1 without previous binding to KPNA1/Importin alpha-1. KPNB1 binds to the GDP bound form of RAN (Ran-GDP) and targets Rev to the nucleus. In the nucleus, the conversion from Ran-GDP to Ran-GTP dissociates Rev from KPNB1 and allows Rev's binding to the RRE in viral pre-mRNAs. Rev multimerization on the RRE via cooperative assembly exposes its nuclear export signal (NES) to the surface. Rev can then form a complex with XPO1/CRM1 and Ran-GTP, leading to nuclear export of the complex. Conversion from Ran-GTP to Ran-GDP mediates dissociation of the Rev/RRE/XPO1/RAN complex, so that Rev can return to the nucleus for a subsequent round of export. Beside KPNB1, also seems to interact with TNPO1/Transportin-1, RANBP5/IPO5 and IPO7/RANBP7 for nuclear import. The nucleoporin-like HRB/RIP is an essential cofactor that probably indirectly interacts with Rev to release HIV RNAs from the perinuclear region to the cytoplasm. The polypeptide is Protein Rev (Human immunodeficiency virus type 1 group M subtype H (isolate VI991) (HIV-1)).